Reading from the N-terminus, the 475-residue chain is Pentatricopeptide repeat-containing protein At1g29710, mitochondrial (475 aa).

The transit peptide at 1–37 directs the protein to the mitochondrion; the sequence is MVRLWCGKLRLWKPYLALATQSRNSWFCSGGGAPSHH. PPR repeat units lie at residues 83 to 117, 118 to 148, 153 to 183, 184 to 218, 219 to 254, and 255 to 285; these read AQNV…GYAM, DLIR…IIAL, DVGA…MPEW, NSGT…GNKP, NGEI…GIVP, and SMEH…MPME. The interval 350-380 is type E(+) motif; sequence YFYSTFRPVDSSHPQMNIIYETLMSLRSQLK. A type DYW motif region spans residues 381 to 475; sequence EMGYVPDTRY…NGVCRCNNLW (95 aa).

This sequence belongs to the PPR family. PCMP-H subfamily.

The protein resides in the mitochondrion. This chain is Pentatricopeptide repeat-containing protein At1g29710, mitochondrial (PCMP-H67), found in Arabidopsis thaliana (Mouse-ear cress).